We begin with the raw amino-acid sequence, 457 residues long: Chromosomal replication initiator protein DnaA (457 aa).

Residues 1 to 75 form a domain I, interacts with DnaA modulators region; the sequence is MDAQLNNLWE…ALKIVTSRKF (75 aa). The segment at 75 to 118 is domain II; that stretch reads FKIEFYLESDLEEEKENEEKQKEEKKDNTNDVDGSIVVSDEMSA. A disordered region spans residues 87–108; it reads EEKENEEKQKEEKKDNTNDVDG. Over residues 91–103 the composition is skewed to basic and acidic residues; it reads NEEKQKEEKKDNT. Positions 119–335 are domain III, AAA+ region; the sequence is TLNPKYTFQS…GALIRIIAYS (217 aa). Residues Gly-163, Gly-165, Lys-166, and Thr-167 each contribute to the ATP site. Residues 336–457 are domain IV, binds dsDNA; the sequence is SLTNRDVSVD…NDITKKLTQK (122 aa).

Belongs to the DnaA family. Oligomerizes as a right-handed, spiral filament on DNA at oriC.

The protein resides in the cytoplasm. Functionally, plays an essential role in the initiation and regulation of chromosomal replication. ATP-DnaA binds to the origin of replication (oriC) to initiate formation of the DNA replication initiation complex once per cell cycle. Binds the DnaA box (a 9 base pair repeat at the origin) and separates the double-stranded (ds)DNA. Forms a right-handed helical filament on oriC DNA; dsDNA binds to the exterior of the filament while single-stranded (ss)DNA is stabiized in the filament's interior. The ATP-DnaA-oriC complex binds and stabilizes one strand of the AT-rich DNA unwinding element (DUE), permitting loading of DNA polymerase. After initiation quickly degrades to an ADP-DnaA complex that is not apt for DNA replication. Binds acidic phospholipids. This chain is Chromosomal replication initiator protein DnaA, found in Clostridium perfringens (strain SM101 / Type A).